We begin with the raw amino-acid sequence, 534 residues long: Importin subunit alpha-1b (534 aa).

The IBB domain maps to 1 to 58 (MSLRPSERAEVRRSRYKVAVDADEGRRRREDNMVEIRKSRREESLLKKRRDGLPAAAA). 8 ARM repeats span residues 111 to 151 (SPPI…NIAS), 154 to 193 (SDNT…NVAG), 196 to 236 (PKCR…NFCR), 238 to 277 (KPQP…YLSD), 280 to 319 (NDKI…NIVT), 322 to 362 (DMQT…NITA), 365 to 404 (REQI…NATS), and 408 to 447 (HDQI…NILK). A disordered region spans residues 505–534 (DAMPSGDNAQNGFNFGNQQPNVPSGGFNFG). Low complexity predominate over residues 514-523 (QNGFNFGNQQ).

The protein belongs to the importin alpha family. Forms a complex with importin subunit beta-1. The whole complex, most stable and composed of importin alpha and importin beta, is referred to as PTAC or pore targeting complex. As to expression, highly expressed in root and weakly in callus, etiolated leaf and green leaf.

The protein localises to the cytoplasm. It is found in the perinuclear region. Functionally, functions in nuclear protein import. Binds specifically and directly to substrates containing either a simple or bipartite NLS motif. Promotes docking of import substrates to the nuclear envelope. In conjunction with importin beta-1, mediates the nuclear envelope docking, and the subsequent translocation into the nucleus of the constitutive morphogenetic 1 (COP1) protein containing bipartite NLS motif. The polypeptide is Importin subunit alpha-1b (Oryza sativa subsp. japonica (Rice)).